The chain runs to 306 residues: Agmatinase (306 aa).

6 residues coordinate Mn(2+): His-126, Asp-149, His-151, Asp-153, Asp-230, and Asp-232.

Belongs to the arginase family. Agmatinase subfamily. It depends on Mn(2+) as a cofactor.

It catalyses the reaction agmatine + H2O = urea + putrescine. The protein operates within amine and polyamine biosynthesis; putrescine biosynthesis via agmatine pathway; putrescine from agmatine: step 1/1. Its function is as follows. Catalyzes the formation of putrescine from agmatine. The sequence is that of Agmatinase from Enterobacter sp. (strain 638).